The primary structure comprises 172 residues: MKLGPGKKAPDEINVFIEIPMGSNIKYEYDEEEDIIKVDRVLYTSMVYPFNYGFIPETLEEDGDPLDVLVLGNYSLMPGTVIEARPIGMIYMRDEEGEDAKVIAVPRNKTDPSFSNINDVKDLPEAIRNKIVHFFEHYKELEPNKWVKISGWGSVAEAKERIKKAIERKKQG.

Substrate contacts are provided by lysine 26, arginine 40, and tyrosine 52. The Mg(2+) site is built by aspartate 62, aspartate 67, and aspartate 99. Tyrosine 138 is a binding site for substrate.

It belongs to the PPase family. Homohexamer. The cofactor is Mg(2+).

The protein resides in the cytoplasm. It carries out the reaction diphosphate + H2O = 2 phosphate + H(+). Functionally, catalyzes the hydrolysis of inorganic pyrophosphate (PPi) forming two phosphate ions. The chain is Inorganic pyrophosphatase from Saccharolobus solfataricus (strain ATCC 35092 / DSM 1617 / JCM 11322 / P2) (Sulfolobus solfataricus).